The following is a 444-amino-acid chain: tRNA modification GTPase MnmE (444 aa).

R22, E79, and R118 together coordinate (6S)-5-formyl-5,6,7,8-tetrahydrofolate. The TrmE-type G domain occupies 214-368; the sequence is GMQVVLAGPP…LRDHLKSVMG (155 aa). Residue N224 coordinates K(+). Residues 224–229, 243–249, and 268–271 contribute to the GTP site; these read NAGKSS, TEVPGTT, and DTAG. Position 228 (S228) interacts with Mg(2+). Positions 243, 245, and 248 each coordinate K(+). Residue T249 participates in Mg(2+) binding. Residue K444 participates in (6S)-5-formyl-5,6,7,8-tetrahydrofolate binding.

It belongs to the TRAFAC class TrmE-Era-EngA-EngB-Septin-like GTPase superfamily. TrmE GTPase family. Homodimer. Heterotetramer of two MnmE and two MnmG subunits. It depends on K(+) as a cofactor.

It is found in the cytoplasm. Its function is as follows. Exhibits a very high intrinsic GTPase hydrolysis rate. Involved in the addition of a carboxymethylaminomethyl (cmnm) group at the wobble position (U34) of certain tRNAs, forming tRNA-cmnm(5)s(2)U34. This is tRNA modification GTPase MnmE from Alkalilimnicola ehrlichii (strain ATCC BAA-1101 / DSM 17681 / MLHE-1).